A 332-amino-acid chain; its full sequence is Ketol-acid reductoisomerase (NADP(+)) (332 aa).

A KARI N-terminal Rossmann domain is found at 2 to 182 (ANIYYDEDAS…GATRAGLIET (181 aa)). NADP(+)-binding positions include 25–28 (YGSQ), serine 51, serine 53, and 83–86 (DTVQ). Histidine 108 is an active-site residue. Glycine 134 serves as a coordination point for NADP(+). One can recognise a KARI C-terminal knotted domain in the interval 183-327 (TFKEETETDL…KELRKMMPWL (145 aa)). 4 residues coordinate Mg(2+): aspartate 191, glutamate 195, glutamate 227, and glutamate 231. Serine 252 contacts substrate.

Belongs to the ketol-acid reductoisomerase family. Mg(2+) serves as cofactor.

It carries out the reaction (2R)-2,3-dihydroxy-3-methylbutanoate + NADP(+) = (2S)-2-acetolactate + NADPH + H(+). It catalyses the reaction (2R,3R)-2,3-dihydroxy-3-methylpentanoate + NADP(+) = (S)-2-ethyl-2-hydroxy-3-oxobutanoate + NADPH + H(+). It functions in the pathway amino-acid biosynthesis; L-isoleucine biosynthesis; L-isoleucine from 2-oxobutanoate: step 2/4. Its pathway is amino-acid biosynthesis; L-valine biosynthesis; L-valine from pyruvate: step 2/4. In terms of biological role, involved in the biosynthesis of branched-chain amino acids (BCAA). Catalyzes an alkyl-migration followed by a ketol-acid reduction of (S)-2-acetolactate (S2AL) to yield (R)-2,3-dihydroxy-isovalerate. In the isomerase reaction, S2AL is rearranged via a Mg-dependent methyl migration to produce 3-hydroxy-3-methyl-2-ketobutyrate (HMKB). In the reductase reaction, this 2-ketoacid undergoes a metal-dependent reduction by NADPH to yield (R)-2,3-dihydroxy-isovalerate. This Sulfurihydrogenibium sp. (strain YO3AOP1) protein is Ketol-acid reductoisomerase (NADP(+)).